The sequence spans 605 residues: DNA mismatch repair protein MutL (605 aa).

The protein belongs to the DNA mismatch repair MutL/HexB family.

This protein is involved in the repair of mismatches in DNA. It is required for dam-dependent methyl-directed DNA mismatch repair. May act as a 'molecular matchmaker', a protein that promotes the formation of a stable complex between two or more DNA-binding proteins in an ATP-dependent manner without itself being part of a final effector complex. The protein is DNA mismatch repair protein MutL of Rhizobium meliloti (strain 1021) (Ensifer meliloti).